We begin with the raw amino-acid sequence, 436 residues long: uncharacterized protein (436 aa).

This is an uncharacterized protein from Arabidopsis thaliana (Mouse-ear cress).